Reading from the N-terminus, the 248-residue chain is MGGSTSKNSFKNTTNIISNSIFNQMQSCISMLDGKNYIGVFGDGNILNHVFQDLNLSLDTSCVQKHVNKENFITNLSNQITQNLKDQEVALTQWMDAGHHDQKTDIEENIKVNLTTTLIQNCVSSLSGMNVLVVKGNGNIVENATQKQSQQIISNCLQGSKQAIDTTTGITNTVNQYSHYTSKNFFDFIADAISAVFKNIMVAAVVIVLIIVGFIAVFYFLHSRHRHEEEEEAEPLISNKVLKNAAVS.

Residue glycine 2 is the site of N-myristoyl glycine; by host attachment. Residues 2 to 199 are Cytoplasmic-facing; sequence GGSTSKNSFK…ADAISAVFKN (198 aa). A helical transmembrane segment spans residues 200 to 220; that stretch reads IMVAAVVIVLIIVGFIAVFYF. Topologically, residues 221 to 248 are extracellular; the sequence is LHSRHRHEEEEEAEPLISNKVLKNAAVS.

It belongs to the asfivirus E248R family. As to quaternary structure, interacts with A151R.

The protein localises to the host membrane. It localises to the virion membrane. Its function is as follows. Essential for viral fusion with host endosomal membrane and core release. This chain is Inner membrane protein pE248R, found in Ornithodoros (relapsing fever ticks).